Reading from the N-terminus, the 284-residue chain is MNLIDGKALAAKMQAELKVKVDKLKEADNVPGLAVILVGEDPASQIYVRNKARQATAIGLNSSVVRLPETVSEQELLDLIEQYNQSEQWHGILVQLPLPEHISEEKVLLAIDPEKDVDGFHPMNMGRLWSGNPLMIPSTPAGIMEMFREYDVELSGKRAVVIGRSNIVGKPMAQLLMMADATVTIAHSKTENLRELTKEADVLVVAIGRDRMIKAEDVKEGAVVIDVGMNRDEDGKLHGDVDFDEVKDVASLITPVPGGVGPMTITMLMEQTVRAASRKMNENK.

NADP(+) contacts are provided by residues 163–165 (GRS) and Ser188.

This sequence belongs to the tetrahydrofolate dehydrogenase/cyclohydrolase family. As to quaternary structure, homodimer.

It carries out the reaction (6R)-5,10-methylene-5,6,7,8-tetrahydrofolate + NADP(+) = (6R)-5,10-methenyltetrahydrofolate + NADPH. The catalysed reaction is (6R)-5,10-methenyltetrahydrofolate + H2O = (6R)-10-formyltetrahydrofolate + H(+). Its pathway is one-carbon metabolism; tetrahydrofolate interconversion. Catalyzes the oxidation of 5,10-methylenetetrahydrofolate to 5,10-methenyltetrahydrofolate and then the hydrolysis of 5,10-methenyltetrahydrofolate to 10-formyltetrahydrofolate. This chain is Bifunctional protein FolD, found in Lactococcus lactis subsp. lactis (strain IL1403) (Streptococcus lactis).